The primary structure comprises 272 residues: Orotidine 5'-phosphate decarboxylase (272 aa).

Catalysis depends on K96, which acts as the Proton donor.

This sequence belongs to the OMP decarboxylase family. Type 2 subfamily.

It carries out the reaction orotidine 5'-phosphate + H(+) = UMP + CO2. The protein operates within pyrimidine metabolism; UMP biosynthesis via de novo pathway; UMP from orotate: step 2/2. In Christiangramia forsetii (strain DSM 17595 / CGMCC 1.15422 / KT0803) (Gramella forsetii), this protein is Orotidine 5'-phosphate decarboxylase.